We begin with the raw amino-acid sequence, 815 residues long: Cell division control protein 48 homolog D (815 aa).

Residue A2 is modified to N-acetylalanine. Residue S42 is modified to Phosphoserine. ATP contacts are provided by residues 249-256 (GPPGSGKT) and 522-529 (GPPGCGKT). S720 carries the post-translational modification Phosphoserine. The disordered stretch occupies residues 772–815 (GSEFRFPDAPTGTTGAFPGAAATVGGVDPFATSGGAADDDDLYS). Over residues 780–798 (APTGTTGAFPGAAATVGGV) the composition is skewed to low complexity.

It belongs to the AAA ATPase family.

It localises to the nucleus. The protein localises to the cytoplasm. The protein resides in the cytoskeleton. Its subcellular location is the phragmoplast. Probably functions in cell division and growth processes. Interacts with certain SNAREs as part of specialized membrane fusion events where vesicles from the same organelle fuse (homotypic fusion). The sequence is that of Cell division control protein 48 homolog D (CDC48D) from Arabidopsis thaliana (Mouse-ear cress).